Here is a 516-residue protein sequence, read N- to C-terminus: Cilia- and flagella-associated protein 53 (516 aa).

Coiled-coil stretches lie at residues 217 to 283 and 316 to 440; these read EEKK…LQVK and MQGY…RQMK. Composition is skewed to basic and acidic residues over residues 417 to 436 and 461 to 472; these read KELL…DRNA and QAEREEEQREFE. Disordered stretches follow at residues 417 to 443 and 455 to 475; these read KELL…KVAQ and YQQS…EAGL.

Belongs to the CFAP53 family.

The protein localises to the cytoplasm. It localises to the cytoskeleton. It is found in the cilium axoneme. The protein resides in the microtubule organizing center. Its subcellular location is the centrosome. The protein localises to the centriolar satellite. Microtubule inner protein (MIP) part of the dynein-decorated doublet microtubules (DMTs) in cilia axoneme, which is required for motile cilia beating. Regulates motility patterns of both 9+0 and 9+2 motile cilia through differential localization and recruitment of axonemal dynein components. Required for motile cilium formation and movement. Involved in the establishment of left-right symmetry during embryogenesis. The chain is Cilia- and flagella-associated protein 53 from Xenopus laevis (African clawed frog).